We begin with the raw amino-acid sequence, 881 residues long: Valine--tRNA ligase (881 aa).

A 'HIGH' region motif is present at residues 49 to 59 (PNVTGKLHLGH). A 'KMSKS' region motif is present at residues 526–530 (KMSKS). An ATP-binding site is contributed by K529. Residues 810–881 (LADLINLDEE…VRQRLADLEK (72 aa)) adopt a coiled-coil conformation.

This sequence belongs to the class-I aminoacyl-tRNA synthetase family. ValS type 1 subfamily. Monomer.

Its subcellular location is the cytoplasm. The catalysed reaction is tRNA(Val) + L-valine + ATP = L-valyl-tRNA(Val) + AMP + diphosphate. Catalyzes the attachment of valine to tRNA(Val). As ValRS can inadvertently accommodate and process structurally similar amino acids such as threonine, to avoid such errors, it has a 'posttransfer' editing activity that hydrolyzes mischarged Thr-tRNA(Val) in a tRNA-dependent manner. In Bacillus anthracis, this protein is Valine--tRNA ligase.